The primary structure comprises 403 residues: Guanine nucleotide-binding protein alpha-8 subunit (403 aa).

A lipid anchor (N-myristoyl glycine) is attached at glycine 2. Cysteine 3 carries S-palmitoyl cysteine lipidation. Residues 31-356 enclose the G-alpha domain; sequence LDFRILLLGA…KVLMKATKDL (326 aa). The interval 34–47 is G1 motif; the sequence is RILLLGAGESGKST. GTP contacts are provided by residues 39 to 46, 174 to 180, 199 to 203, 268 to 271, and alanine 324; these read GAGESGKS, IMTRVRT, DVGGQ, and NKKD. Positions 46 and 180 each coordinate Mg(2+). The interval 172-180 is G2 motif; the sequence is DCIMTRVRT. The G3 motif stretch occupies residues 195–204; it reads FRVVDVGGQR. The G4 motif stretch occupies residues 264–271; sequence FLVLNKKD. The segment at 322–327 is G5 motif; it reads IAARYK. The tract at residues 353 to 403 is disordered; that stretch reads TKDLKKSSKQSSKSSLGNSTQNNSNNNNNNNNSNNNNGQTTIDGATAKINS. Positions 374-389 are enriched in low complexity; it reads NNSNNNNNNNNSNNNN. Positions 390-403 are enriched in polar residues; the sequence is GQTTIDGATAKINS.

Belongs to the G-alpha family. G proteins are composed of 3 units; alpha, beta and gamma. The alpha chain contains the guanine nucleotide binding site.

In terms of biological role, guanine nucleotide-binding proteins (G proteins) are involved as modulators or transducers in various transmembrane signaling systems. G alpha-8 is a potential analog for the G(s)-like G-proteins which stimulate adenylate cyclase in mammals. This Dictyostelium discoideum (Social amoeba) protein is Guanine nucleotide-binding protein alpha-8 subunit (gpaH).